The chain runs to 613 residues: Penicillin-binding protein activator LpoA (613 aa).

The first 29 residues, M1–G29, serve as a signal peptide directing secretion. The N-palmitoyl cysteine moiety is linked to residue C30. C30 is lipidated: S-diacylglycerol cysteine.

It belongs to the LpoA family. As to quaternary structure, interacts with PBP1a.

The protein resides in the cell outer membrane. Regulator of peptidoglycan synthesis that is essential for the function of penicillin-binding protein 1A (PBP1a). This Photobacterium profundum (strain SS9) protein is Penicillin-binding protein activator LpoA.